The following is a 539-amino-acid chain: MQINGITPQALAAYGIHDVRDIVYNPSYELLFKEERSPTLQGYERGIETQLGAVAVDTGIFTGRSPKDKYIVRDDVTRDTVWWSDQGKGKNDNHPLSQETWTHLKELVTTQLSGKRLFIIDAFCGANPDSRLSVRFVTEVAWQAHFVKNMFIRPSDEELEGFEPDFIVMNGAKCTNPNWQEQGLNSENFVAFNLTERIQLIGGTWYGGEMKKGMFSIMNYLLPLKGIASMHCSANVGEKGDVAVFFGLSGTGKTTLSTDPKRQLIGDDEHGWDDDGVFNFEGGCYAKTIKLSKEAEPDIFGAIKRDALLENVTVLADGAVDFNDGSKTENTRVSYPIYHIHNIVKPVSKAGHATKVILLTADAFGVLPPVSRLTSDQTQYHFLSGFTAKLAGTERGVTEPTPTFSACFGAAFLMLHPTQYAEVLVKRMKASGAQAYLVNTGWNGSGKRISIKDTRGIIDAILNGSIDDAEMQTLPVFDLAIPTSLPGVNPDILDPRDTYASIEQWQEKADDLAQRFITNFDKYTDAPAGAALVKAGPKR.

Substrate-binding residues include R64, Y206, and K212. ATP is bound by residues K212, H231, and 247-255; that span reads GLSGTGKTT. K212 and H231 together coordinate Mn(2+). D268 serves as a coordination point for Mn(2+). Residues E296, R332, 448–449, and T454 each bind ATP; that span reads RI. R332 serves as a coordination point for substrate.

Belongs to the phosphoenolpyruvate carboxykinase (ATP) family. In terms of assembly, monomer. It depends on Mn(2+) as a cofactor.

The protein resides in the cytoplasm. The enzyme catalyses oxaloacetate + ATP = phosphoenolpyruvate + ADP + CO2. It functions in the pathway carbohydrate biosynthesis; gluconeogenesis. Functionally, involved in the gluconeogenesis. Catalyzes the conversion of oxaloacetate (OAA) to phosphoenolpyruvate (PEP) through direct phosphoryl transfer between the nucleoside triphosphate and OAA. This Pectobacterium atrosepticum (strain SCRI 1043 / ATCC BAA-672) (Erwinia carotovora subsp. atroseptica) protein is Phosphoenolpyruvate carboxykinase (ATP).